The sequence spans 287 residues: CBK1 kinase activator protein MOB2 (287 aa).

The interval 1–89 is disordered; that stretch reads MSFFNFKAFG…QQQEASERSE (89 aa). Y33 is subject to Phosphotyrosine. Positions 34-44 are enriched in low complexity; the sequence is SSPHSSNSRLS. A compositionally biased stretch (basic residues) spans 45 to 56; sequence LRNKHHSPKRHS. At S59 the chain carries Phosphoserine. Positions 63 to 83 are enriched in low complexity; sequence QKSTPQSQQLTSTTPQSQQQE. The residue at position 76 (T76) is a Phosphothreonine.

Belongs to the MOB1/phocein family. Interacts with protein kinase CBK1 to form the RAM CBK1-MOB2 kinase complex.

It localises to the nucleus. The protein localises to the cytoplasm. In terms of biological role, functions as an activator subunit for the CBK1 protein kinase. Part of the regulation of ACE2 activity and cellular morphogenesis (RAM) signaling network. Required for coordinating polarized cell growth during interphase with the onset of mitosis. Required for mother/daughter cell separation after cytokinesis. Also has a role in the prevention of nuclear export of ACE2 from the daughter cell nucleus after mitotic exit. It coordinates ACE2-dependent transcription with mitotic exit network activation. The polypeptide is CBK1 kinase activator protein MOB2 (MOB2) (Saccharomyces cerevisiae (strain ATCC 204508 / S288c) (Baker's yeast)).